The following is a 1456-amino-acid chain: Macrophage mannose receptor 1 (1456 aa).

Positions 1–19 (MRLLLLLAFISVIPVSVQL) are cleaved as a signal peptide. Residues 20–1388 (LDARQFLIYN…DPQPKGSSKA (1369 aa)) lie on the Extracellular side of the membrane. The Ricin B-type lectin domain occupies 22-142 (ARQFLIYNED…SGLWSRWKVY (121 aa)). 7 cysteine pairs are disulfide-bonded: Cys35-Cys49, Cys74-Cys91, Cys102-Cys149, Cys168-Cys194, Cys182-Cys209, Cys247-Cys340, and Cys316-Cys332. Asn104 carries an N-linked (GlcNAc...) asparagine glycan. One can recognise a Fibronectin type-II domain in the interval 163 to 211 (ANGAVCAFPFKFENKWYADCTSAGRSDGWLWCGTTTDYDKDKLFGFCPL). The 117-residue stretch at 225 to 341 (LTGILYQINS…CVQKLGYICK (117 aa)) folds into the C-type lectin 1 domain. N-linked (GlcNAc...) asparagine glycosylation occurs at Asn344. C-type lectin domains follow at residues 369 to 487 (YAGH…YICK), 511 to 626 (HGFY…FVCK), 655 to 778 (KTSM…WICQ), and 807 to 923 (YKDY…FICQ). 2 disulfides stabilise this stretch: Cys391–Cys486 and Cys463–Cys478. An N-linked (GlcNAc...) asparagine glycan is attached at Asn529. 6 cysteine pairs are disulfide-bonded: Cys532–Cys625, Cys600–Cys617, Cys680–Cys777, Cys753–Cys769, Cys828–Cys922, and Cys899–Cys914. N-linked (GlcNAc...) asparagine glycans are attached at residues Asn926 and Asn930. C-type lectin domains follow at residues 951-1079 (YKNK…YICQ), 1101-1212 (YGKS…FLCK), and 1240-1355 (FYGH…FICK). Intrachain disulfides connect Cys976/Cys1078, Cys1051/Cys1070, Cys1122/Cys1211, Cys1189/Cys1203, Cys1262/Cys1354, and Cys1331/Cys1346. The N-linked (GlcNAc...) asparagine glycan is linked to Asn1159. Asn1204 carries an N-linked (GlcNAc...) asparagine glycan. A helical membrane pass occupies residues 1389–1409 (AGVVTVVLLIVIGAGVAAYFF). Residues 1410-1456 (YKKRHALHIPQEATFENTLYFNSNLSPGTSDTKDLMGNIEQNEHAII) are Cytoplasmic-facing.

As to expression, detected in macrophages.

The protein resides in the endosome membrane. Its subcellular location is the cell membrane. Mediates the endocytosis of glycoproteins by macrophages. Binds both sulfated and non-sulfated polysaccharide chains. Acts as phagocytic receptor for bacteria, fungi and other pathogens. The chain is Macrophage mannose receptor 1 (Mrc1) from Mus musculus (Mouse).